A 237-amino-acid chain; its full sequence is tRNA1(Val) (adenine(37)-N6)-methyltransferase (237 aa).

The protein belongs to the methyltransferase superfamily. tRNA (adenine-N(6)-)-methyltransferase family.

The protein resides in the cytoplasm. It carries out the reaction adenosine(37) in tRNA1(Val) + S-adenosyl-L-methionine = N(6)-methyladenosine(37) in tRNA1(Val) + S-adenosyl-L-homocysteine + H(+). In terms of biological role, specifically methylates the adenine in position 37 of tRNA(1)(Val) (anticodon cmo5UAC). The polypeptide is tRNA1(Val) (adenine(37)-N6)-methyltransferase (Bacteroides fragilis (strain ATCC 25285 / DSM 2151 / CCUG 4856 / JCM 11019 / LMG 10263 / NCTC 9343 / Onslow / VPI 2553 / EN-2)).